Here is a 473-residue protein sequence, read N- to C-terminus: BPI fold-containing family B member 3 (473 aa).

The first 20 residues, 1 to 20 (MMLGVYTLLLLWGLATPCLG), serve as a signal peptide directing secretion. N-linked (GlcNAc...) asparagine glycosylation is present at asparagine 139. Cysteines 161 and 196 form a disulfide.

Belongs to the BPI/LBP/Plunc superfamily. BPI/LBP family.

It localises to the secreted. Functionally, may have the capacity to recognize and bind specific classes of odorants. May act as a carrier molecule, transporting odorants across the mucus layer to access receptor sites. May serve as a primary defense mechanism by recognizing and removing potentially harmful odorants or pathogenic microorganisms from the mucosa or clearing excess odorant from mucus to enable new odorant stimuli to be received. In Mus musculus (Mouse), this protein is BPI fold-containing family B member 3.